We begin with the raw amino-acid sequence, 216 residues long: Imidazole glycerol phosphate synthase subunit HisH (216 aa).

In terms of domain architecture, Glutamine amidotransferase type-1 spans Arg2–Pro216. The active-site Nucleophile is the Cys88. Catalysis depends on residues His196 and Glu198.

As to quaternary structure, heterodimer of HisH and HisF.

Its subcellular location is the cytoplasm. The catalysed reaction is 5-[(5-phospho-1-deoxy-D-ribulos-1-ylimino)methylamino]-1-(5-phospho-beta-D-ribosyl)imidazole-4-carboxamide + L-glutamine = D-erythro-1-(imidazol-4-yl)glycerol 3-phosphate + 5-amino-1-(5-phospho-beta-D-ribosyl)imidazole-4-carboxamide + L-glutamate + H(+). It carries out the reaction L-glutamine + H2O = L-glutamate + NH4(+). It participates in amino-acid biosynthesis; L-histidine biosynthesis; L-histidine from 5-phospho-alpha-D-ribose 1-diphosphate: step 5/9. IGPS catalyzes the conversion of PRFAR and glutamine to IGP, AICAR and glutamate. The HisH subunit catalyzes the hydrolysis of glutamine to glutamate and ammonia as part of the synthesis of IGP and AICAR. The resulting ammonia molecule is channeled to the active site of HisF. This Mesorhizobium japonicum (strain LMG 29417 / CECT 9101 / MAFF 303099) (Mesorhizobium loti (strain MAFF 303099)) protein is Imidazole glycerol phosphate synthase subunit HisH.